We begin with the raw amino-acid sequence, 29 residues long: L-serine dehydratase, beta chain (29 aa).

Belongs to the iron-sulfur dependent L-serine dehydratase family. As to quaternary structure, heterodimer of an alpha chain and a beta chain. [4Fe-4S] cluster is required as a cofactor.

It catalyses the reaction L-serine = pyruvate + NH4(+). It participates in carbohydrate biosynthesis; gluconeogenesis. This chain is L-serine dehydratase, beta chain, found in Anaerotignum propionicum (Clostridium propionicum).